The following is a 253-amino-acid chain: 5'-nucleotidase SurE (253 aa).

Positions 8, 9, 39, and 92 each coordinate a divalent metal cation.

This sequence belongs to the SurE nucleotidase family. A divalent metal cation is required as a cofactor.

It is found in the cytoplasm. The enzyme catalyses a ribonucleoside 5'-phosphate + H2O = a ribonucleoside + phosphate. Nucleotidase that shows phosphatase activity on nucleoside 5'-monophosphates. This is 5'-nucleotidase SurE from Burkholderia mallei (strain NCTC 10247).